The following is a 185-amino-acid chain: HTH-type transcriptional regulator SA2364 (185 aa).

Positions 6–66 (KENRQRIEEI…YVIQRDLDIF (61 aa)) constitute an HTH tetR-type domain. A DNA-binding region (H-T-H motif) is located at residues 29 to 48 (SMNRIAKELGIGMGTLYRHF).

The chain is HTH-type transcriptional regulator SA2364 from Staphylococcus aureus (strain N315).